Reading from the N-terminus, the 297-residue chain is MTRYRGRFAPSPTGPLHFGSLVGALASWLDARAWGGAWLVRIEDIDGPRTVPGAAEDMLATLRGFGFIADEPPVWQSARVAHYEAALARLTAAGLVYPCGCSRKEIADSLRAAHERHTTLAYPGTCRTGLHGKPARAWRLRVPDGAAAVVAFDDRWQRAQTQNLATEVGDFVLKRADGQWAYQLAVVVDDGDANITHVVRGADLLDSTARQIYLQRCLGLPTPRYLHVPVVLDANGEKLSKQTGAAALDPAAPLPALAAAARHLGLALDGAACASLDAFQAAAIAAWDARFGPNARG.

L-glutamate contacts are provided by residues 7–11 (RFAPS) and Glu-43. A 'HIGH' region motif is present at residues 10–20 (PSPTGPLHFGS). Zn(2+) contacts are provided by Cys-99, Cys-101, Tyr-122, and Cys-126. Residues Tyr-182 and Arg-200 each contribute to the L-glutamate site. Residues 238–242 (KLSKQ) carry the 'KMSKS' region motif. Lys-241 is a binding site for ATP.

Belongs to the class-I aminoacyl-tRNA synthetase family. GluQ subfamily. The cofactor is Zn(2+).

Functionally, catalyzes the tRNA-independent activation of glutamate in presence of ATP and the subsequent transfer of glutamate onto a tRNA(Asp). Glutamate is transferred on the 2-amino-5-(4,5-dihydroxy-2-cyclopenten-1-yl) moiety of the queuosine in the wobble position of the QUC anticodon. The chain is Glutamyl-Q tRNA(Asp) synthetase from Burkholderia pseudomallei (strain K96243).